Consider the following 204-residue polypeptide: INSIG protein homolog (204 aa).

5 helical membrane-spanning segments follow: residues 5-27, 47-64, 76-97, 101-118, and 124-145; these read ISEA…HSHV, FWFP…AELR, ARQA…ALVH, VVPV…TWCV, and GAAC…LVQL. Residue His-26 coordinates a 1,2-diacyl-sn-glycerol. Residue Tyr-150 coordinates a 1,2-diacyl-sn-glycerol. A helical membrane pass occupies residues 162 to 179; that stretch reads PFLAPLYFAFGVVAALLG.

It belongs to the INSIG family. Homotrimer.

The protein localises to the membrane. In terms of biological role, diacylglycerol-binding protein. This Mycolicibacterium vanbaalenii (strain DSM 7251 / JCM 13017 / BCRC 16820 / KCTC 9966 / NRRL B-24157 / PYR-1) (Mycobacterium vanbaalenii) protein is INSIG protein homolog.